Reading from the N-terminus, the 313-residue chain is Undecaprenyl-diphosphatase (313 aa).

Helical transmembrane passes span 121-141 (YRIG…GFLF), 152-172 (LWLV…AEHY), 187-207 (GLVM…RSGA), 225-245 (FSFL…LPDA), 259-279 (QLLV…AWLL), and 290-310 (FVGY…AGVI).

It belongs to the UppP family.

It is found in the cell membrane. It carries out the reaction di-trans,octa-cis-undecaprenyl diphosphate + H2O = di-trans,octa-cis-undecaprenyl phosphate + phosphate + H(+). Its function is as follows. Catalyzes the dephosphorylation of undecaprenyl diphosphate (UPP). Confers resistance to bacitracin. This chain is Undecaprenyl-diphosphatase, found in Nocardia farcinica (strain IFM 10152).